Reading from the N-terminus, the 503-residue chain is Cytochrome P450 3A9 (503 aa).

C442 lines the heme pocket.

It belongs to the cytochrome P450 family. The cofactor is heme. In terms of tissue distribution, mainly expressed in olfactory epithelium.

It is found in the endoplasmic reticulum membrane. Its subcellular location is the microsome membrane. The enzyme catalyses an organic molecule + reduced [NADPH--hemoprotein reductase] + O2 = an alcohol + oxidized [NADPH--hemoprotein reductase] + H2O + H(+). Its function is as follows. This isozyme seems to be implicated in olfaction. Active in the demethylation of erythromycin as well as benzphetamine. This is Cytochrome P450 3A9 (Cyp3a9) from Rattus norvegicus (Rat).